The following is a 560-amino-acid chain: Cytosolic purine 5'-nucleotidase (560 aa).

The active-site Nucleophile is aspartate 52. Residues aspartate 52 and aspartate 54 each contribute to the IMP site. Residues aspartate 52 and aspartate 54 each coordinate Mg(2+). The active-site Proton donor is aspartate 54. ATP is bound by residues arginine 144 and asparagine 154. Arginine 202, aspartate 206, lysine 215, threonine 249, asparagine 250, serine 251, and lysine 292 together coordinate IMP. Aspartate 351 serves as a coordination point for Mg(2+). Residue serine 418 is modified to Phosphoserine. Residues glutamine 453 and arginine 456 each contribute to the ATP site. Serine 502, serine 511, and serine 527 each carry phosphoserine. Residues 541-560 (PQEITHCHDEDDDEEEEEEE) form a disordered region. The interval 548-560 (HDEDDDEEEEEEE) is required for tetramer assembly. Acidic residues predominate over residues 550–560 (EDDDEEEEEEE).

Belongs to the 5'(3')-deoxyribonucleotidase family. As to quaternary structure, homotetramer. It depends on Mg(2+) as a cofactor.

It localises to the cytoplasm. The protein localises to the cytosol. It carries out the reaction a ribonucleoside 5'-phosphate + H2O = a ribonucleoside + phosphate. The enzyme catalyses a 2'-deoxyribonucleoside + a ribonucleoside 5'-phosphate = a ribonucleoside + a 2'-deoxyribonucleoside 5'-phosphate. It catalyses the reaction IMP + H2O = inosine + phosphate. The catalysed reaction is GMP + H2O = guanosine + phosphate. It carries out the reaction dIMP + H2O = 2'-deoxyinosine + phosphate. The enzyme catalyses dGMP + H2O = 2'-deoxyguanosine + phosphate. It catalyses the reaction XMP + H2O = xanthosine + phosphate. The catalysed reaction is inosine + GMP = guanosine + IMP. It carries out the reaction dGMP + inosine = 2'-deoxyguanosine + IMP. The enzyme catalyses dIMP + inosine = 2'-deoxyinosine + IMP. It catalyses the reaction inosine + UMP = uridine + IMP. The catalysed reaction is inosine + CMP = cytidine + IMP. It carries out the reaction inosine + AMP = IMP + adenosine. With respect to regulation, allosterically activated by various compounds including ATP, 2,3-BPG/2,3-Bisphosphoglyceric acid and Ap4A/P1,P4-bis(5'-adenosyl) tetraphosphate. Binding of an allosteric activator is a prerequisiste to magnesium and substrate binding. Inhibited by inorganic phosphate. Broad specificity cytosolic 5'-nucleotidase that catalyzes the dephosphorylation of 6-hydroxypurine nucleoside 5'-monophosphates. In addition, possesses a phosphotransferase activity by which it can transfer a phosphate from a donor nucleoside monophosphate to an acceptor nucleoside, preferably inosine, deoxyinosine and guanosine. Has the highest activities for IMP and GMP followed by dIMP, dGMP and XMP. Could also catalyze the transfer of phosphates from pyrimidine monophosphates but with lower efficiency. Through these activities regulates the purine nucleoside/nucleotide pools within the cell. The chain is Cytosolic purine 5'-nucleotidase from Bos taurus (Bovine).